The following is a 509-amino-acid chain: Scavenger receptor class B member 1 (509 aa).

Residues 1–11 (MGGSSRARWVA) lie on the Cytoplasmic side of the membrane. A helical transmembrane segment spans residues 12–32 (LGLGALGLLFAALGVVMILMV). Residues 33 to 440 (PSLIKQQVLK…YTQLVLMPQV (408 aa)) lie on the Extracellular side of the membrane. 11 N-linked (GlcNAc...) asparagine glycosylation sites follow: asparagine 102, asparagine 108, asparagine 116, asparagine 173, asparagine 212, asparagine 227, asparagine 255, asparagine 288, asparagine 310, asparagine 330, and asparagine 383. A disulfide bond links cysteine 251 and cysteine 384. Residues 441 to 461 (LHYAQYVLLGLGGLLLLVPII) form a helical membrane-spanning segment. Cysteine 462 carries S-palmitoyl cysteine lipidation. Residues 462 to 509 (CQLRSQEKCFLFWSGSKKGSQDKEAIQAYSESLMSPAAKGTVLQEAKL) are Cytoplasmic-facing.

The protein belongs to the CD36 family. As to quaternary structure, the C-terminal region binds to PDZK1. In terms of processing, N-glycosylated. Post-translationally, the six cysteines of the extracellular domain are all involved in intramolecular disulfide bonds. As to expression, expressed primarily in liver, ovary and adrenal gland, and, at lower levels in other non-placental steroidogenic tissues, including adipose tissue, mammary gland and testis (at protein level). Isoform 2 is expressed at lower levels than isoform 1 in liver, testis and adrenal gland. At the mRNA, but not at the protein level, isoform 2 is the predominant isoform in testis (80%).

The protein resides in the cell membrane. The protein localises to the membrane. It is found in the caveola. Functionally, receptor for different ligands such as phospholipids, cholesterol ester, lipoproteins, phosphatidylserine and apoptotic cells. Both isoform 1 and isoform 2 act as receptors for HDL, mediating selective uptake of cholesteryl ether and HDL-dependent cholesterol efflux. Also facilitates the flux of free and esterified cholesterol between the cell surface and apoB-containing lipoproteins and modified lipoproteins, although less efficiently than HDL. May be involved in the phagocytosis of apoptotic cells, via its phosphatidylserine binding activity. This Mus musculus (Mouse) protein is Scavenger receptor class B member 1 (Scarb1).